A 172-amino-acid polypeptide reads, in one-letter code: MPTPTKGPRLGGGPAHERLMLANLATALFRHGRIKTTEAKAKRLRPYAEKLITLGKRGDLHARRQVLTKIRDKAVVHELFTEIGPRYENRNGGYTRITKIGNRKGDNAPMAVIELVEALNKPATGSKRAQTEEAASQEPAAEAGKQPAEGATSVQTAEAADASQAEGEAEEK.

Residues 123 to 172 are disordered; the sequence is ATGSKRAQTEEAASQEPAAEAGKQPAEGATSVQTAEAADASQAEGEAEEK. A compositionally biased stretch (low complexity) spans 132-143; sequence EEAASQEPAAEA.

This sequence belongs to the bacterial ribosomal protein bL17 family. As to quaternary structure, part of the 50S ribosomal subunit. Contacts protein L32.

The chain is Large ribosomal subunit protein bL17 from Thermobifida fusca (strain YX).